The primary structure comprises 593 residues: FAD-binding monooxygenase acrE (593 aa).

FAD is bound by residues 61 to 64, 73 to 74, and Tyr-79; these read TWRF and DS. 71 to 73 contacts NADP(+); that stretch reads RVD. NADP(+) contacts are provided by residues 200-206 and 223-224; these read TGASGVQ and RS.

This sequence belongs to the FAD-binding monooxygenase family. Requires FAD as cofactor.

Its pathway is secondary metabolite biosynthesis. In terms of biological role, FAD-binding monooxygenase; part of the cluster that mediates the biosynthesis of acurin A, a highly reduced polyketide coupled to a serine via a peptide bond. The activities of the highly reducing polyketide synthase acrA and the nonribosomal peptide synthetase acrB are collectively responsible for the synthesis of the acurin A core structure with a heptaketide backbone produced by acrA covalently fused to a L-serine by acrB. After the formation of the PK-NRP hybrid product, it is detached from acrB by reductive release to set up the formation of the lactam ring by aldol condensation. The hydrolyase acrC then catalyzes water loss to generate a double bond in the ring. This double bond is probably reduced, which is followed by three oxidations at C-22 to generate the carboxylic acid moiety, involving probably the FAD-binding monooxygenase acrE and the cytochrome P450 monooxygenases acrD and acrF. Finally, a last methylation step performed by the O-methyltransferase acrG leads to the production of acurin A. This is FAD-binding monooxygenase acrE from Aspergillus aculeatus (strain ATCC 16872 / CBS 172.66 / WB 5094).